Reading from the N-terminus, the 800-residue chain is DNA topoisomerase 4 subunit A (800 aa).

The Topo IIA-type catalytic domain occupies leucine 31 to valine 496. Residue tyrosine 119 is the O-(5'-phospho-DNA)-tyrosine intermediate of the active site.

The protein belongs to the type II topoisomerase GyrA/ParC subunit family. ParC type 2 subfamily. In terms of assembly, heterotetramer composed of ParC and ParE.

The protein resides in the cell membrane. It catalyses the reaction ATP-dependent breakage, passage and rejoining of double-stranded DNA.. Its function is as follows. Topoisomerase IV is essential for chromosome segregation. It relaxes supercoiled DNA. Performs the decatenation events required during the replication of a circular DNA molecule. In Staphylococcus epidermidis (strain ATCC 12228 / FDA PCI 1200), this protein is DNA topoisomerase 4 subunit A.